We begin with the raw amino-acid sequence, 153 residues long: 6,7-dimethyl-8-ribityllumazine synthase (153 aa).

Residues F22, 56 to 58, and 80 to 82 each bind 5-amino-6-(D-ribitylamino)uracil; these read AFE and AVI. Position 85 to 86 (85 to 86) interacts with (2S)-2-hydroxy-3-oxobutyl phosphate; it reads ST. Catalysis depends on H88, which acts as the Proton donor. F113 contacts 5-amino-6-(D-ribitylamino)uracil. (2S)-2-hydroxy-3-oxobutyl phosphate is bound at residue R127.

This sequence belongs to the DMRL synthase family.

The catalysed reaction is (2S)-2-hydroxy-3-oxobutyl phosphate + 5-amino-6-(D-ribitylamino)uracil = 6,7-dimethyl-8-(1-D-ribityl)lumazine + phosphate + 2 H2O + H(+). The protein operates within cofactor biosynthesis; riboflavin biosynthesis; riboflavin from 2-hydroxy-3-oxobutyl phosphate and 5-amino-6-(D-ribitylamino)uracil: step 1/2. In terms of biological role, catalyzes the formation of 6,7-dimethyl-8-ribityllumazine by condensation of 5-amino-6-(D-ribitylamino)uracil with 3,4-dihydroxy-2-butanone 4-phosphate. This is the penultimate step in the biosynthesis of riboflavin. This Clostridium botulinum (strain Alaska E43 / Type E3) protein is 6,7-dimethyl-8-ribityllumazine synthase.